The sequence spans 66 residues: Phylloseptin-S2 (66 aa).

An N-terminal signal peptide occupies residues 1–22; it reads MAFLKKSLFLVLFLGLVSLSIC. A propeptide spanning residues 23-46 is cleaved from the precursor; the sequence is EEEKRETEEEEHDQEEDDKSEEKR. Positions 25–44 are disordered; sequence EKRETEEEEHDQEEDDKSEE. Positions 30-41 are enriched in acidic residues; the sequence is EEEEHDQEEDDK. Phe-65 carries the phenylalanine amide modification.

As to expression, expressed by the skin glands.

It localises to the secreted. Its subcellular location is the target cell membrane. Functionally, antimicrobial peptide with high activity against Gram-positive bacteria, moderate activity against Gram-negative bacteria, and moderate activity against fungi. Acts by causing bacterial membrane disruption inducing leakage of the intracellular content followed by cell death. It adopts an alpha-helical amphipathic structure in membrane environments. Also shows highly potent antiparasitic activity against Leishmania species. Shows moderate hemolytic activity on human erythrocytes (LC(50)=25 uM). Is also active on human monocytes (IC(50)=22.5 uM). The sequence is that of Phylloseptin-S2 from Phyllomedusa sauvagei (Sauvage's leaf frog).